Consider the following 838-residue polypeptide: MTMIETQLRSLLVTTKPIRDLTIDAVIAATKRAEQRIAPLWPLRYFVAVNPYLGLIDHTFADAAQLLARRTDARMTAPRDFYAQAIKSGRITDADLAAAIADEKLPSPAPASVAALKEFAFSKDPDPATTPLPTIADVATTVTGINWADFVTDAISTWAGAYFDLGQSYWRSPWAQLPAYAAWRAEAAHDRTAQARGVHGMRRALRELPETALETIVTAVKMLNIPEQGLEAYLHRLLLTIHGWASYARYLRWDAELYGGEDHTLTDLLAIRLVWEVALWHSFADRGVAEAWHKCKPELSNEQLTETARYALAGNILLQRAFEKSYQRQLFARLGTARPATTPQRKRVQAAFCIDVRSEIFRRALETTTDDIETIGFAGFFGFPIEYVPLAEVHGGAQCPVLLTPQFVIAEAVDGASTDEVAKIIERRALRQRVAKAWRMFKFAPISCFGFVGPVGLAYLRKLVLDTLGITRPVPHPAQFGLDARTREHVAPILEPGLIGDRPTGMTLEQRVAAAAGALKAMSLTDNFARIVLLAGHGSTTVNNPHATGLDCGACGGHTGEANVRVAVRILNDPAVRTKLKEQGIVIPDDTVFVAALHDTTTDDITIFDKHMIPASHADDLKRLEADLAAAGRLARAERAALLKIDRKADIDRQVRQRSKDWSQVRPEWGLAGCAAFIAAPRDRTAGIKLDGRSFLHSYTWQQDSDFSVLELIMTAPMIVASWINLQYYGSTVDNRLFGSGNKTLHNVVGTLGVLEGNAGDLRVGLPWQSVHDGENYVHEPMRLHVLIEAPIPAMTAIIAKHEQVRQLLDNGWLYLFALDDRGVVTHKYAGNLQWEPV.

Residues cysteine 353, aspartate 355, histidine 537, and cysteine 552 each contribute to the Zn(2+) site.

This sequence belongs to the inorganic carbon transporter (TC 9.A.2) DabA family. As to quaternary structure, forms a complex with DabB. It depends on Zn(2+) as a cofactor.

The protein localises to the cell membrane. Functionally, part of an energy-coupled inorganic carbon pump. The polypeptide is Probable inorganic carbon transporter subunit DabA (Chloroflexus aurantiacus (strain ATCC 29366 / DSM 635 / J-10-fl)).